A 105-amino-acid chain; its full sequence is Heat shock protein HspQ (105 aa).

It belongs to the HspQ family.

Its subcellular location is the cytoplasm. Its function is as follows. Involved in the degradation of certain denaturated proteins, including DnaA, during heat shock stress. In Sodalis glossinidius (strain morsitans), this protein is Heat shock protein HspQ.